We begin with the raw amino-acid sequence, 531 residues long: Pancreatic secretory granule membrane major glycoprotein GP2 (531 aa).

The signal sequence occupies residues 1-21; that stretch reads MVGCDLLWLAAASCVLTLVSP. The N-linked (GlcNAc...) asparagine glycan is linked to N33. Residues 34–53 form a beta hairpin region; it reads SSNLDLDCGSPDSPSSGICF. Intrachain disulfides connect C41-C52, C56-C151, C79-C169, C101-C139, C107-C174, C132-C140, C184-C194, C188-C203, C205-C235, C223-C314, and C255-C278. A D10C region spans residues 54-74; that stretch reads DPCQNHTVLNDPTRSTENNDS. N-linked (GlcNAc...) asparagine glycans are attached at residues N58 and N72. The region spanning 180 to 224 is the EGF-like domain; that stretch reads APKNCEITCRPEEECVFQNNNWSCVCRQDLHVSDSQSLQPLLDCG. N-linked (GlcNAc...) asparagine glycosylation is present at N200. Positions 222–315 are ZP-N; that stretch reads DCGDNEIKVK…FRVNVNFQCA (94 aa). A ZP domain is found at 222–478; it reads DCGDNEIKVK…PSCSTNRLRS (257 aa). N-linked (GlcNAc...) asparagine glycosylation is found at N256 and N285. The interval 316-339 is flexible ZP-N/ZP-C linker; that stretch reads YPLDMSVSLETALQPIVSSLTVDV. The tract at residues 340–351 is internal hydrophobic patch (IHP); the sequence is DGAGEFNVKMAL. The ZP-C stretch occupies residues 340 to 478; sequence DGAGEFNVKM…PSCSTNRLRS (139 aa). 3 disulfides stabilise this stretch: C395–C455, C416–C471, and C460–C467. Residues 485-493 form an external hydrophobic patch (EHP) region; that stretch reads YNRVLDLGP.

In terms of assembly, interacts with SYCN. Interacts with bacterial adhesin fimH. N-glycosylated. In terms of tissue distribution, specifically expressed by M (microfold) cells which are atypical epithelial cells of the intestine.

The protein resides in the zymogen granule membrane. It localises to the secreted. Its subcellular location is the cell membrane. It is found in the apical cell membrane. The protein localises to the membrane raft. The protein resides in the endosome. In terms of biological role, functions as an intestinal M-cell transcytotic receptor specific of type-I-piliated bacteria that participates in the mucosal immune response toward these bacteria. At the apical membrane of M-cells it binds fimH, a protein of the bacteria type I pilus tip. Internalizes bound bacteria, like E.coli and S.typhimurium, from the lumen of the intestine and delivers them, through M-cells, to the underlying organized lymphoid follicles where they are captured by antigen-presenting dendritic cells to elicit a mucosal immune response. This chain is Pancreatic secretory granule membrane major glycoprotein GP2, found in Mus musculus (Mouse).